The primary structure comprises 89 residues: Cell division topological specificity factor (89 aa).

It belongs to the MinE family.

Prevents the cell division inhibition by proteins MinC and MinD at internal division sites while permitting inhibition at polar sites. This ensures cell division at the proper site by restricting the formation of a division septum at the midpoint of the long axis of the cell. This chain is Cell division topological specificity factor, found in Klebsiella pneumoniae (strain 342).